Consider the following 962-residue polypeptide: MVSSRRGFNPIAFTPWPVTILSSLVYLALIIPIIVVHHLVPPAPKESPAGVDLEEAWHDLQHLTRQYHPYNSHSNDEVHQWLLKRIHAISATSARSESQSGPEVFVFDDNQTNLTFSSAGVAATAITGVYFESRNIVVYIRGTEDEPGEWWKSPDGEPSGKGGVLVNAHYDSVSTGYGATDNGVGVITTLQLLKYFTTPGHYPRKGLVLLFNNGEEDFLNGAYAYSQHPMSKFTHTFLNLEGAGAGGRAVLFRSTDTEVTRFYGKSEHPFGTVLARDAFKLKFIRSETDYHVFDGVFGMRGLDVAFMEPRSRYHTDQDDARHTSIDSVWHMLSAAITTTEGLVSYTGDAFDGDSGDGGKLNNGIGTLGVWFDFFGSSFAVFQLNTLFGHSVALLVVAPLLLIITSVALFAVDKMYMFSMYTYISESGGQVSLYGLRGMFRFPLILGISTALTIALAFLIMKVNPFIIYSSPYAVWSMMLSTCMFFAWFISCVADFARPSALHRAYSFSWMFGIMWVFLVIATVYQKQHGIASSYFIVFYFAGVAVATWISYLELFGLPKTQDYARRQGRLSDRTPSSDSHFLAPSADELPSSSSAAGRDFNPEDVEDEEPTESTSLLRGQQRTTFANYASARGSQESNISNQGNNSLHPKDHRLEQKWSIYLMSSAWILQFLLVAPIVIILLGQLGLFLTSATYQIGADGGSQLVIYIGIAVLSVLILLPLFPFIHRFTYHIPTFLLFILIGTLVYNLTAFPFSHSNRLKLAFVQEMDLATGNNQASLVGVEPYIHDAVHAIPSVQDGKISCTSHGYGGRTKCSWPGLKPKVAEGPYKDWVSYNISKTKDDKITRFEVSGKNTRACKLLFDSPIADFHVQGSVVDKRLPHTGPKGVSEIRLWSRNWENTWTVDVEWTKKNSERTGKVMCLWSDDNDLHVIPELDLARKFAPWWVAITKLRDGLVEGSYSFKL.

Residues 1-15 (MVSSRRGFNPIAFTP) lie on the Cytoplasmic side of the membrane. The helical transmembrane segment at 16–36 (WPVTILSSLVYLALIIPIIVV) threads the bilayer. Residues 37 to 390 (HHLVPPAPKE…FQLNTLFGHS (354 aa)) lie on the Vacuolar side of the membrane. Asn-110 and Asn-113 each carry an N-linked (GlcNAc...) asparagine glycan. Zn(2+) is bound by residues His-169 and Asp-181. Residue Glu-215 is the Proton acceptor of the active site. Positions 216, 241, and 314 each coordinate Zn(2+). Residues 391-411 (VALLVVAPLLLIITSVALFAV) traverse the membrane as a helical segment. Topologically, residues 412-440 (DKMYMFSMYTYISESGGQVSLYGLRGMFR) are cytoplasmic. A helical transmembrane segment spans residues 441–461 (FPLILGISTALTIALAFLIMK). Residues 462 to 472 (VNPFIIYSSPY) lie on the Vacuolar side of the membrane. Residues 473–493 (AVWSMMLSTCMFFAWFISCVA) traverse the membrane as a helical segment. Over 494 to 503 (DFARPSALHR) the chain is Cytoplasmic. The helical transmembrane segment at 504–524 (AYSFSWMFGIMWVFLVIATVY) threads the bilayer. Over 525–534 (QKQHGIASSY) the chain is Vacuolar. A helical membrane pass occupies residues 535–555 (FIVFYFAGVAVATWISYLELF). Topologically, residues 556–667 (GLPKTQDYAR…WSIYLMSSAW (112 aa)) are cytoplasmic. The disordered stretch occupies residues 568 to 617 (GRLSDRTPSSDSHFLAPSADELPSSSSAAGRDFNPEDVEDEEPTESTSLL). Acidic residues predominate over residues 602 to 611 (PEDVEDEEPT). The chain crosses the membrane as a helical span at residues 668 to 688 (ILQFLLVAPIVIILLGQLGLF). Residues 689-704 (LTSATYQIGADGGSQL) lie on the Vacuolar side of the membrane. The chain crosses the membrane as a helical span at residues 705-725 (VIYIGIAVLSVLILLPLFPFI). The Cytoplasmic segment spans residues 726 to 731 (HRFTYH). Residues 732 to 752 (IPTFLLFILIGTLVYNLTAFP) form a helical membrane-spanning segment. At 753–962 (FSHSNRLKLA…LVEGSYSFKL (210 aa)) the chain is on the vacuolar side. Asn-834 carries N-linked (GlcNAc...) asparagine glycosylation.

Belongs to the peptidase M28 family. It depends on Zn(2+) as a cofactor.

It localises to the vacuole membrane. In terms of biological role, may be involved in vacuolar sorting and osmoregulation. In Arthroderma benhamiae (strain ATCC MYA-4681 / CBS 112371) (Trichophyton mentagrophytes), this protein is Vacuolar membrane protease.